Here is a 577-residue protein sequence, read N- to C-terminus: Arginine--tRNA ligase (577 aa).

Residues 122–132 (PNVAKEMHVGH) carry the 'HIGH' region motif.

The protein belongs to the class-I aminoacyl-tRNA synthetase family. As to quaternary structure, monomer.

It is found in the cytoplasm. The enzyme catalyses tRNA(Arg) + L-arginine + ATP = L-arginyl-tRNA(Arg) + AMP + diphosphate. This chain is Arginine--tRNA ligase, found in Histophilus somni (strain 2336) (Haemophilus somnus).